A 363-amino-acid polypeptide reads, in one-letter code: Lipase (363 aa).

An N-terminal signal peptide occupies residues 1 to 24 (MVLKQRANYLGFLIVFFTAFLVEA). A propeptide spanning residues 25 to 94 (VPIKRQSNST…SYPDSVVQAM (70 aa)) is cleaved from the precursor. A disordered region spans residues 33–69 (STVDSLPPLIPSRTSAPSSSPSTTDPEAPAMSRNGPL). Residues 43–62 (PSRTSAPSSSPSTTDPEAPA) show a composition bias toward low complexity. 3 disulfide bridges follow: Cys-123/Cys-362, Cys-134/Cys-137, and Cys-329/Cys-338. Residue Ser-238 is the Nucleophile of the active site. The Charge relay system role is filled by Asp-297. A Ca(2+)-binding site is contributed by Asp-350. The active-site Charge relay system is the His-351.

It belongs to the AB hydrolase superfamily. Lipase family.

It catalyses the reaction a triacylglycerol + H2O = a diacylglycerol + a fatty acid + H(+). This chain is Lipase, found in Rhizomucor miehei.